The sequence spans 323 residues: ATP synthase gamma chain (323 aa).

An insert region spans residues Asn-206 to Ile-240.

Belongs to the ATPase gamma chain family. As to quaternary structure, F-type ATPases have 2 components, CF(1) - the catalytic core - and CF(0) - the membrane proton channel. CF(1) has five subunits: alpha(3), beta(3), gamma(1), delta(1), epsilon(1). CF(0) has three main subunits: a, b and c.

Its subcellular location is the cell inner membrane. In terms of biological role, produces ATP from ADP in the presence of a proton gradient across the membrane. The gamma chain is believed to be important in regulating ATPase activity and the flow of protons through the CF(0) complex. In Rickettsia conorii (strain ATCC VR-613 / Malish 7), this protein is ATP synthase gamma chain.